The chain runs to 73 residues: uncharacterized protein (73 aa).

Residues 1 to 22 form the signal peptide; sequence MKILGVTGFILICLLAISVLMD. The chain crosses the membrane as a helical span at residues 44-66; that stretch reads TFAEWVVLLFFVLVLVREMYVIY.

It localises to the membrane. This is an uncharacterized protein from Bacillus subtilis (strain 168).